We begin with the raw amino-acid sequence, 781 residues long: DNA translocase FtsK 2 (781 aa).

4 helical membrane passes run 24-44 (LLGEVRWFLLLAVTIAFLTIL), 74-94 (FADVLLFVFGASAYWWALLLL), 120-140 (AGVTWFGFALILSASMGLEAI), and 170-190 (GFTGGTLLLLLMFTVGLSLFF). Residues 191 to 781 (HFSWLNLAEQ…NRNGNVVEEE (591 aa)) lie on the Cytoplasmic side of the membrane. Residues 414-623 (GKPVVADLAK…FQVSSKIDSR (210 aa)) enclose the FtsK domain. 434 to 439 (GSGKSV) contacts ATP.

Belongs to the FtsK/SpoIIIE/SftA family. Homohexamer. Forms a ring that surrounds DNA.

It is found in the cell inner membrane. Essential cell division protein that coordinates cell division and chromosome segregation. The N-terminus is involved in assembly of the cell-division machinery. The C-terminus functions as a DNA motor that moves dsDNA in an ATP-dependent manner towards the dif recombination site, which is located within the replication terminus region. Translocation stops specifically at Xer-dif sites, where FtsK interacts with the Xer recombinase, allowing activation of chromosome unlinking by recombination. FtsK orienting polar sequences (KOPS) guide the direction of DNA translocation. FtsK can remove proteins from DNA as it translocates, but translocation stops specifically at XerCD-dif site, thereby preventing removal of XerC and XerD from dif. This chain is DNA translocase FtsK 2 (ftsK2), found in Ralstonia nicotianae (strain ATCC BAA-1114 / GMI1000) (Ralstonia solanacearum).